We begin with the raw amino-acid sequence, 85 residues long: Small ribosomal subunit protein uS17 (85 aa).

This sequence belongs to the universal ribosomal protein uS17 family. In terms of assembly, part of the 30S ribosomal subunit.

One of the primary rRNA binding proteins, it binds specifically to the 5'-end of 16S ribosomal RNA. The sequence is that of Small ribosomal subunit protein uS17 from Pasteurella multocida (strain Pm70).